Reading from the N-terminus, the 480-residue chain is UDP-glycosyltransferase 72B1 (480 aa).

Residue His19 is the Proton acceptor of the active site. Asp117 serves as the catalytic Charge relay. Residues Ser277, Trp346, Ala347, and His364 each contribute to the UDP site. Residues Ser277, Trp346, Ala347, His364, Trp367, Asn368, Ser369, Glu372, Tyr386, Glu388, and Gln389 each coordinate UDP-alpha-D-glucose. UDP is bound by residues Asn368, Ser369, Glu372, and Tyr386.

This sequence belongs to the UDP-glycosyltransferase family.

The enzyme catalyses hydroquinone + UDP-alpha-D-glucose = hydroquinone O-beta-D-glucopyranoside + UDP + H(+). Functionally, bifunctional O-glycosyltransferase and N-glycosyltransferase that can detoxify xenobiotics. Possesses high activity to metabolize the persistent pollutants 2,4,5-trichlorophenol (TCP) and 3,4-dichloroaniline (DCA). Also active on benzoates and benzoate derivatives in vitro. The polypeptide is UDP-glycosyltransferase 72B1 (UGT72B1) (Arabidopsis thaliana (Mouse-ear cress)).